The chain runs to 955 residues: Aminopeptidase A (955 aa).

At 1 to 17 (MDIEDKSSKMHCMKGKH) the chain is on the cytoplasmic side. The chain crosses the membrane as a helical; Signal-anchor for type II membrane protein span at residues 18–38 (VAIICGVVIAVGLILGLGLGL). Residues 39–955 (GLKPEACNPP…LENSEQPNFV (917 aa)) are Extracellular-facing. The interval 49-69 (EDNGLLSTKPPTTSTPNVTNP) is disordered. Positions 55-69 (STKPPTTSTPNVTNP) are enriched in low complexity. Asn65, Asn118, and Asn192 each carry an N-linked (GlcNAc...) asparagine glycan. Residue Glu218 participates in substrate binding. 3 N-linked (GlcNAc...) asparagine glycosylation sites follow: Asn312, Asn319, and Asn335. 352–356 (GAMEN) contacts substrate. His388 is a Zn(2+) binding site. Glu389 acts as the Proton acceptor in catalysis. Zn(2+) contacts are provided by His392 and Glu411. 11 N-linked (GlcNAc...) asparagine glycosylation sites follow: Asn458, Asn547, Asn584, Asn592, Asn647, Asn674, Asn681, Asn759, Asn766, Asn823, and Asn836. Residue Arg882 participates in substrate binding.

This sequence belongs to the peptidase M1 family. In terms of assembly, homodimer; disulfide-linked. Requires Zn(2+) as cofactor.

It is found in the cell membrane. The enzyme catalyses Release of N-terminal glutamate (and to a lesser extent aspartate) from a peptide.. The partially purified protein is inhibited by the aminopeptidase competitive inhibitors amastatin (Leu and acidic inhibitor), and bestatin (Leu inhibitor), by chelating agents EDTA, and 1,10-Phenanthroline, as well as by Zn(2+) ions. Substrate specificity is modulated by Ca(2+), Ba(2+), and Mn(2+) ions which enhances the enzymatic activity for cleavage of acidic residues. Its function is as follows. Venom protein that cleaves N-terminal acidic residues from peptides with high potency in presence of calcium. It may have several roles in venom including alteration of blood pressure by cleaving circulating angiotensin-2, general degradation of host tissue, increase of permeability to other venom components, and/or processing of other toxins in the venom. This chain is Aminopeptidase A, found in Gloydius brevicauda (Korean slamosa snake).